We begin with the raw amino-acid sequence, 298 residues long: 4-hydroxy-tetrahydrodipicolinate synthase (298 aa).

Position 51 (Thr-51) interacts with pyruvate. Tyr-140 functions as the Proton donor/acceptor in the catalytic mechanism. Lys-168 serves as the catalytic Schiff-base intermediate with substrate. Ile-210 contacts pyruvate.

Belongs to the DapA family. Homotetramer; dimer of dimers.

Its subcellular location is the cytoplasm. The catalysed reaction is L-aspartate 4-semialdehyde + pyruvate = (2S,4S)-4-hydroxy-2,3,4,5-tetrahydrodipicolinate + H2O + H(+). It functions in the pathway amino-acid biosynthesis; L-lysine biosynthesis via DAP pathway; (S)-tetrahydrodipicolinate from L-aspartate: step 3/4. Functionally, catalyzes the condensation of (S)-aspartate-beta-semialdehyde [(S)-ASA] and pyruvate to 4-hydroxy-tetrahydrodipicolinate (HTPA). This is 4-hydroxy-tetrahydrodipicolinate synthase from Acidovorax sp. (strain JS42).